The sequence spans 509 residues: Telomeric repeat-binding factor 2-interacting protein 1 (509 aa).

Positions 1-91 (MAALGGLTHS…KLLDVDDYRL (91 aa)) constitute a BRCT domain. The interval 93 to 168 (GSHGRPRKSQ…RKKENKMDCS (76 aa)) is disordered. Positions 115 to 127 (VGESSQESDQKQQ) are enriched in polar residues. Basic and acidic residues predominate over residues 159–168 (RKKENKMDCS). The 55-residue stretch at 185-239 (RRNVFTEKEDVAIMLYVRENAPHRGTGVSLWKEMEQKQVVKRTWQAIKNRYFRYL) folds into the Myb-like domain. 2 disordered regions span residues 249–359 (LTDD…ENQD) and 399–423 (DLPS…ESEG). Composition is skewed to basic and acidic residues over residues 286–296 (GVAEKTGEKLS) and 321–344 (VEER…KSTE). The span at 401 to 418 (PSSQSQTQVDEVSSSPDA) shows a compositional bias: polar residues. The Nuclear localization signal motif lies at 493–509 (QKYGADNVAKRVAFLAS).

This sequence belongs to the RAP1 family. In terms of assembly, homodimer. Component of the shelterin complex (telosome). Interacts with terf2; the interaction is direct.

Its subcellular location is the nucleus. The protein resides in the chromosome. It localises to the telomere. Functionally, acts both as a regulator of telomere function and as a transcription regulator. Involved in the regulation of telomere length and protection as a component of the shelterin complex (telosome). Does not bind DNA directly: recruited to telomeric double-stranded 5'-TTAGGG-3' repeats via its interaction with terf2. Independently of its function in telomeres, also acts as a transcription regulator: recruited to extratelomeric 5'-TTAGGG-3' sites via its association with terf2 or other factors, and regulates gene expression. In Xenopus tropicalis (Western clawed frog), this protein is Telomeric repeat-binding factor 2-interacting protein 1 (terf2ip).